A 138-amino-acid polypeptide reads, in one-letter code: Putative pre-16S rRNA nuclease (138 aa).

The protein belongs to the YqgF nuclease family.

The protein localises to the cytoplasm. Functionally, could be a nuclease involved in processing of the 5'-end of pre-16S rRNA. The polypeptide is Putative pre-16S rRNA nuclease (Klebsiella pneumoniae (strain 342)).